The following is a 237-amino-acid chain: EVKLVESGGGLVQPGGSLSLSCATSGFTFIDYYMSWFRQPPGKALEWLGLIRNKGNGYTMEYSASLKGRFTISRDNSQSIVYLHMNTLTAEDSATYYCARVDYGTNYDYWGQGTTLTVSSAKTTAPSVYPLAPVCGDTTGSSVTLGCLVKGYFPEPVTLTWNSGSLSSGVHTFPAVLQSDLYTLSSSVTVTSSTWPSQSITCNVAHPASSTKVDKKIEPRGPTIKPCPPCKCPAPNS.

Ig-like domains follow at residues 1 to 119 (EVKL…LTVS) and 126 to 218 (PSVY…KKIE). The cysteines at positions 22 and 98 are disulfide-linked. The tract at residues 101–105 (VDYGT) is d segment. The segment at 106 to 120 (NYDYWGQGTTLTVSS) is JH2 segment. Cys147 and Cys202 are disulfide-bonded.

Its subcellular location is the secreted. Its function is as follows. Anti-influenza H3N2 neuraminidase antibody. This chain is Ig heavy chain Mem5, found in Mus musculus (Mouse).